We begin with the raw amino-acid sequence, 72 residues long: Translation initiation factor IF-1 (72 aa).

Residues 1–72 enclose the S1-like domain; that stretch reads MAKEDCIEME…TKGRIKFRSK (72 aa).

The protein belongs to the IF-1 family. As to quaternary structure, component of the 30S ribosomal translation pre-initiation complex which assembles on the 30S ribosome in the order IF-2 and IF-3, IF-1 and N-formylmethionyl-tRNA(fMet); mRNA recruitment can occur at any time during PIC assembly.

It is found in the cytoplasm. One of the essential components for the initiation of protein synthesis. Stabilizes the binding of IF-2 and IF-3 on the 30S subunit to which N-formylmethionyl-tRNA(fMet) subsequently binds. Helps modulate mRNA selection, yielding the 30S pre-initiation complex (PIC). Upon addition of the 50S ribosomal subunit IF-1, IF-2 and IF-3 are released leaving the mature 70S translation initiation complex. The polypeptide is Translation initiation factor IF-1 (Francisella tularensis subsp. tularensis (strain WY96-3418)).